The following is a 237-amino-acid chain: Uridylate kinase (237 aa).

12 to 15 serves as a coordination point for ATP; that stretch reads KLSG. Positions 20 to 25 are involved in allosteric activation by GTP; sequence GEDGLG. Residue G54 participates in UMP binding. Positions 55 and 59 each coordinate ATP. UMP contacts are provided by residues D74 and 135–142; that span reads TGNPFFTT. Residues T162, Y168, and D171 each coordinate ATP.

The protein belongs to the UMP kinase family. As to quaternary structure, homohexamer.

The protein localises to the cytoplasm. The catalysed reaction is UMP + ATP = UDP + ADP. It functions in the pathway pyrimidine metabolism; CTP biosynthesis via de novo pathway; UDP from UMP (UMPK route): step 1/1. Its activity is regulated as follows. Allosterically activated by GTP. Inhibited by UTP. Functionally, catalyzes the reversible phosphorylation of UMP to UDP. In Haemophilus influenzae (strain 86-028NP), this protein is Uridylate kinase.